Reading from the N-terminus, the 154-residue chain is Nuclear cap-binding protein subunit 2-A (154 aa).

Residues Y10, Y33, 102-106 (RVDWD), 113-117 (RQYGR), and 123-124 (QV) each bind mRNA. Positions 30–108 (STLYVGNLSF…RLIRVDWDAG (79 aa)) constitute an RRM domain.

It belongs to the RRM NCBP2 family. In terms of assembly, component of the nuclear cap-binding complex (CBC), a heterodimer composed of Cbp80 and Cbp20 that interacts with m7GpppG-capped RNA. Interacts with Ars2.

The protein localises to the nucleus. Its function is as follows. Component of the cap-binding complex (CBC), which binds co-transcriptionally to the 5' cap of pre-mRNAs and is involved in various processes such as pre-mRNA splicing and RNA-mediated gene silencing (RNAi). The CBC complex is involved in miRNA-mediated RNA interference via its interaction with Ars2 and is required for primary microRNAs (miRNAs) processing. Also involved in innate immunity via the short interfering RNAs (siRNAs) processing machinery by restricting the viral RNA production. In the CBC complex, Cbp20 recognizes and binds capped RNAs (m7GpppG-capped RNA) but requires Cbp80 to stabilize the movement of its N-terminal loop and lock the CBC into a high affinity cap-binding state with the cap structure. The protein is Nuclear cap-binding protein subunit 2-A (Cbp20-A) of Drosophila virilis (Fruit fly).